The chain runs to 496 residues: Galactose/methyl galactoside import ATP-binding protein MglA (496 aa).

2 consecutive ABC transporter domains span residues 5 to 240 (LTIR…VGRT) and 243 to 496 (KRFP…ARYL). 37-44 (GENGAGKS) serves as a coordination point for ATP.

The protein belongs to the ABC transporter superfamily. Galactose/methyl galactoside importer (TC 3.A.1.2.3) family. As to quaternary structure, the complex is composed of one ATP-binding protein (MglA), two transmembrane proteins (MglC) and a solute-binding protein (MglB).

The protein resides in the cell inner membrane. The catalysed reaction is D-galactose(out) + ATP + H2O = D-galactose(in) + ADP + phosphate + H(+). The enzyme catalyses methyl beta-D-galactoside(out) + ATP + H2O = methyl beta-D-galactoside(in) + ADP + phosphate + H(+). Its function is as follows. Part of the ABC transporter complex MglABC involved in galactose/methyl galactoside import. Responsible for energy coupling to the transport system. The sequence is that of Galactose/methyl galactoside import ATP-binding protein MglA from Treponema pallidum (strain Nichols).